We begin with the raw amino-acid sequence, 977 residues long: Ubiquitin-like modifier-activating enzyme 7 (977 aa).

Belongs to the ubiquitin-activating E1 family. In terms of processing, ubiquitinated by RNF170.

The protein localises to the cytoplasm. Its subcellular location is the nucleus. It participates in protein modification; protein ubiquitination. Functionally, E1-activating enzyme that catalyzes the covalent conjugation of the ubiquitin-like protein product of ISG15 to additional interferons stimulated proteins (ISGs) as well as other cellular proteins such as P53 in a process termed protein ISGylation. Plays an essential role in antiviral immunity together with ISG15 by restricting the replication of many viruses including rabies virus, influenza virus, sindbis virus or rotavirus. The sequence is that of Ubiquitin-like modifier-activating enzyme 7 from Mus musculus (Mouse).